A 661-amino-acid chain; its full sequence is Polyadenylate-binding protein, cytoplasmic and nuclear (661 aa).

The span at Met1–Glu11 shows a compositional bias: polar residues. Positions Met1 to Gly61 are disordered. Positions Ser20–Asp51 are enriched in low complexity. RRM domains lie at Ala67–Arg145, Gly155–Ser232, Thr248–Lys325, and Val351–Arg428. The disordered stretch occupies residues Phe473–Pro563. Positions Glu501–Gln511 are enriched in pro residues. A compositionally biased stretch (polar residues) spans Gln523–Pro532. The segment covering Gln533 to Gln549 has biased composition (low complexity). Positions Pro563–Asn644 constitute a PABC domain.

This sequence belongs to the polyadenylate-binding protein type-1 family.

It is found in the cytoplasm. The protein localises to the nucleus. Functionally, binds the poly(A) tail of mRNA. Appears to be an important mediator of the multiple roles of the poly(A) tail in mRNA biogenesis, stability and translation. In the nucleus, involved in both mRNA cleavage and polyadenylation. Is also required for efficient mRNA export to the cytoplasm. Acts in concert with a poly(A)-specific nuclease (PAN) to affect poly(A) tail shortening, which may occur concomitantly with either nucleocytoplasmic mRNA transport or translational initiation. In the cytoplasm, stimulates translation initiation and regulates mRNA decay through translation termination-coupled poly(A) shortening, probably mediated by PAN. In Lodderomyces elongisporus (strain ATCC 11503 / CBS 2605 / JCM 1781 / NBRC 1676 / NRRL YB-4239) (Yeast), this protein is Polyadenylate-binding protein, cytoplasmic and nuclear (PAB1).